A 98-amino-acid polypeptide reads, in one-letter code: uncharacterized protein (98 aa).

An N-terminal signal peptide occupies residues 1–23 (MKYVALAFVLSLVILQISAQVGA).

As to expression, nacreous layer of shell (at protein level). Expressed primarily in the mantle with highest level in the mantle pallium and lower level in the mantle edge.

The protein localises to the secreted. This is an uncharacterized protein from Pinctada maxima (Silver-lipped pearl oyster).